A 165-amino-acid polypeptide reads, in one-letter code: MSFFIEKEVECNFNFDYEKVAEAVVSASLEHENFPYEAEVNLTLTDNEGIHAINKEYRQIDRPTDVLSFPMLSYETPGDFSFLSDENEDDFNPDTGEVMLGDIIISVDKVKEQAVEYGHSEKREFAFLITHSMLHLFGYDHMEADEAAVMEEHQRKILDALGITR.

3 residues coordinate Zn(2+): His-131, His-135, and His-141.

It belongs to the endoribonuclease YbeY family. Requires Zn(2+) as cofactor.

The protein resides in the cytoplasm. Single strand-specific metallo-endoribonuclease involved in late-stage 70S ribosome quality control and in maturation of the 3' terminus of the 16S rRNA. This chain is Endoribonuclease YbeY, found in Agathobacter rectalis (strain ATCC 33656 / DSM 3377 / JCM 17463 / KCTC 5835 / VPI 0990) (Eubacterium rectale).